The primary structure comprises 238 residues: Uridylate kinase (238 aa).

10-13 (KFSG) serves as a coordination point for ATP. Residues 18 to 23 (GDSGFG) form an involved in allosteric activation by GTP region. Residue glycine 52 coordinates UMP. ATP contacts are provided by glycine 53 and arginine 57. UMP is bound by residues aspartate 73 and 134–141 (TGNPFFTT). 3 residues coordinate ATP: threonine 161, tyrosine 167, and aspartate 170.

The protein belongs to the UMP kinase family. Homohexamer.

It is found in the cytoplasm. It catalyses the reaction UMP + ATP = UDP + ADP. It functions in the pathway pyrimidine metabolism; CTP biosynthesis via de novo pathway; UDP from UMP (UMPK route): step 1/1. Its activity is regulated as follows. Allosterically activated by GTP. Inhibited by UTP. Its function is as follows. Catalyzes the reversible phosphorylation of UMP to UDP. This Campylobacter curvus (strain 525.92) protein is Uridylate kinase.